We begin with the raw amino-acid sequence, 757 residues long: 5-methyltetrahydropteroyltriglutamate--homocysteine methyltransferase (757 aa).

Residues 16-19 (RELK) and Lys112 each bind 5-methyltetrahydropteroyltri-L-glutamate. L-homocysteine-binding positions include 433–435 (IGS) and Glu486. Residues 433–435 (IGS) and Glu486 contribute to the L-methionine site. Residues 517–518 (RC) and Trp563 contribute to the 5-methyltetrahydropteroyltri-L-glutamate site. Asp601 is a binding site for L-homocysteine. Asp601 provides a ligand contact to L-methionine. Position 607 (Glu607) interacts with 5-methyltetrahydropteroyltri-L-glutamate. The Zn(2+) site is built by His643, Cys645, and Glu667. Catalysis depends on His696, which acts as the Proton donor. Cys728 lines the Zn(2+) pocket.

Belongs to the vitamin-B12 independent methionine synthase family. Zn(2+) is required as a cofactor.

The catalysed reaction is 5-methyltetrahydropteroyltri-L-glutamate + L-homocysteine = tetrahydropteroyltri-L-glutamate + L-methionine. It participates in amino-acid biosynthesis; L-methionine biosynthesis via de novo pathway; L-methionine from L-homocysteine (MetE route): step 1/1. Catalyzes the transfer of a methyl group from 5-methyltetrahydrofolate to homocysteine resulting in methionine formation. This Histophilus somni (strain 2336) (Haemophilus somnus) protein is 5-methyltetrahydropteroyltriglutamate--homocysteine methyltransferase.